The following is a 598-amino-acid chain: Arginine--tRNA ligase (598 aa).

Residues 131-141 carry the 'HIGH' region motif; sequence ANPTGPMHVGH. The segment at 288–309 is disordered; sequence KLPPPKSKKGQPPPQAQPDEEG.

Belongs to the class-I aminoacyl-tRNA synthetase family. As to quaternary structure, monomer.

It localises to the cytoplasm. The enzyme catalyses tRNA(Arg) + L-arginine + ATP = L-arginyl-tRNA(Arg) + AMP + diphosphate. The sequence is that of Arginine--tRNA ligase from Anaeromyxobacter dehalogenans (strain 2CP-C).